A 321-amino-acid chain; its full sequence is Glucokinase (321 aa).

ATP is bound at residue 8–13; the sequence is GDVGGT.

Belongs to the bacterial glucokinase family.

It localises to the cytoplasm. It carries out the reaction D-glucose + ATP = D-glucose 6-phosphate + ADP + H(+). The polypeptide is Glucokinase (Salmonella choleraesuis (strain SC-B67)).